The following is a 142-amino-acid chain: Hemoglobin subunit alpha (142 aa).

In terms of domain architecture, Globin spans 2–142 (KLSAEDKHNV…VGHVLTSKYR (141 aa)). H59 contacts O2. Heme b is bound at residue H88.

This sequence belongs to the globin family. In terms of assembly, heterotetramer of two alpha chains and two beta chains. Red blood cells.

In terms of biological role, involved in oxygen transport from the lung to the various peripheral tissues. The chain is Hemoglobin subunit alpha (HBA) from Taricha granulosa (Roughskin newt).